A 163-amino-acid chain; its full sequence is Glycine cleavage system H protein, mitochondrial (163 aa).

Residues 1–34 (MALRMWASSAANALGVSCAPKSHLLPALSLSRCF) constitute a mitochondrion transit peptide. Residues 56-137 (VATIGITDHA…YEEGWMVKVK (82 aa)) enclose the Lipoyl-binding domain. Residue lysine 96 is modified to N6-lipoyllysine.

Belongs to the GcvH family. The glycine cleavage system is composed of four proteins: P, T, L and H. The cofactor is (R)-lipoate.

The protein localises to the mitochondrion. Its function is as follows. The glycine cleavage system catalyzes the degradation of glycine. The H protein shuttles the methylamine group of glycine from the P protein to the T protein. The chain is Glycine cleavage system H protein, mitochondrial (GDCSH) from Mesembryanthemum crystallinum (Common ice plant).